Consider the following 534-residue polypeptide: uncharacterized protein (534 aa).

Disordered stretches follow at residues 1–93, 123–260, 313–349, and 383–505; these read MSSS…DDTG, SPES…LSSA, AAAT…TFPS, and PWGA…QGCP. Residues 35-45 show a composition bias toward pro residues; the sequence is GPGPDPGPEPG. Phosphoserine occurs at positions 87 and 123. Low complexity predominate over residues 145 to 161; sequence RGAAAQRCGEAARAEAG. Basic and acidic residues predominate over residues 230–239; sequence SPKDPRDTPR.

This is an uncharacterized protein from Bos taurus (Bovine).